The primary structure comprises 156 residues: ATP synthase subunit b (156 aa).

A helical transmembrane segment spans residues 13-33 (AFIIFVWFCMKFVWPPLMNAI).

This sequence belongs to the ATPase B chain family. F-type ATPases have 2 components, F(1) - the catalytic core - and F(0) - the membrane proton channel. F(1) has five subunits: alpha(3), beta(3), gamma(1), delta(1), epsilon(1). F(0) has three main subunits: a(1), b(2) and c(10-14). The alpha and beta chains form an alternating ring which encloses part of the gamma chain. F(1) is attached to F(0) by a central stalk formed by the gamma and epsilon chains, while a peripheral stalk is formed by the delta and b chains.

The protein resides in the cell inner membrane. F(1)F(0) ATP synthase produces ATP from ADP in the presence of a proton or sodium gradient. F-type ATPases consist of two structural domains, F(1) containing the extramembraneous catalytic core and F(0) containing the membrane proton channel, linked together by a central stalk and a peripheral stalk. During catalysis, ATP synthesis in the catalytic domain of F(1) is coupled via a rotary mechanism of the central stalk subunits to proton translocation. Its function is as follows. Component of the F(0) channel, it forms part of the peripheral stalk, linking F(1) to F(0). The protein is ATP synthase subunit b of Shewanella woodyi (strain ATCC 51908 / MS32).